The chain runs to 88 residues: Sec-independent protein translocase protein TatA (88 aa).

A helical transmembrane segment spans residues 1-21 (MGSLSPWHWAILAVVVIVLFG). Positions 43–52 (MREMQSETKA) are enriched in basic and acidic residues. The segment at 43–88 (MREMQSETKAEPSAIETNTANPTPVQSQRIDPAAATGQDQTEARPA) is disordered. Polar residues predominate over residues 57–71 (IETNTANPTPVQSQR).

It belongs to the TatA/E family. In terms of assembly, the Tat system comprises two distinct complexes: a TatABC complex, containing multiple copies of TatA, TatB and TatC subunits, and a separate TatA complex, containing only TatA subunits. Substrates initially bind to the TatABC complex, which probably triggers association of the separate TatA complex to form the active translocon.

It is found in the cell membrane. In terms of biological role, part of the twin-arginine translocation (Tat) system that transports large folded proteins containing a characteristic twin-arginine motif in their signal peptide across membranes. TatA could form the protein-conducting channel of the Tat system. This chain is Sec-independent protein translocase protein TatA, found in Mycobacterium marinum (strain ATCC BAA-535 / M).